The following is a 361-amino-acid chain: tRNA/tmRNA (uracil-C(5))-methyltransferase (361 aa).

S-adenosyl-L-methionine-binding residues include glutamine 185, tyrosine 213, asparagine 218, glutamate 234, and aspartate 294. Cysteine 319 (nucleophile) is an active-site residue. Glutamate 353 acts as the Proton acceptor in catalysis.

Belongs to the class I-like SAM-binding methyltransferase superfamily. RNA M5U methyltransferase family. TrmA subfamily.

It carries out the reaction uridine(54) in tRNA + S-adenosyl-L-methionine = 5-methyluridine(54) in tRNA + S-adenosyl-L-homocysteine + H(+). It catalyses the reaction uridine(341) in tmRNA + S-adenosyl-L-methionine = 5-methyluridine(341) in tmRNA + S-adenosyl-L-homocysteine + H(+). In terms of biological role, dual-specificity methyltransferase that catalyzes the formation of 5-methyluridine at position 54 (m5U54) in all tRNAs, and that of position 341 (m5U341) in tmRNA (transfer-mRNA). This Pseudomonas putida (strain ATCC 47054 / DSM 6125 / CFBP 8728 / NCIMB 11950 / KT2440) protein is tRNA/tmRNA (uracil-C(5))-methyltransferase.